Here is a 186-residue protein sequence, read N- to C-terminus: Protein Syd (186 aa).

It belongs to the Syd family.

The protein localises to the cell inner membrane. Its function is as follows. Interacts with the SecY protein in vivo. May bind preferentially to an uncomplexed state of SecY, thus functioning either as a chelating agent for excess SecY in the cell or as a regulatory factor that negatively controls the translocase function. This chain is Protein Syd, found in Pseudoalteromonas atlantica (strain T6c / ATCC BAA-1087).